The primary structure comprises 214 residues: Ribonuclease HII (214 aa).

The region spanning 26–214 (EIVCGVDEAG…PVREAFDLIR (189 aa)) is the RNase H type-2 domain. 3 residues coordinate a divalent metal cation: Asp-32, Glu-33, and Asp-124.

This sequence belongs to the RNase HII family. It depends on Mn(2+) as a cofactor. Mg(2+) serves as cofactor.

It localises to the cytoplasm. It catalyses the reaction Endonucleolytic cleavage to 5'-phosphomonoester.. Functionally, endonuclease that specifically degrades the RNA of RNA-DNA hybrids. The sequence is that of Ribonuclease HII from Burkholderia pseudomallei (strain 1710b).